A 255-amino-acid chain; its full sequence is uncharacterized protein (255 aa).

A compositionally biased stretch (basic residues) spans 1–10; sequence MSDSIHRRKV. The disordered stretch occupies residues 1–78; it reads MSDSIHRRKV…SPMRGLPMEE (78 aa). Over residues 44–61 the composition is skewed to basic and acidic residues; sequence VFERSFSEPSLNRHRDGQ.

This is an uncharacterized protein from Arabidopsis thaliana (Mouse-ear cress).